The following is a 348-amino-acid chain: Lysophosphatidic acid receptor 2 (348 aa).

The Extracellular portion of the chain corresponds to 1–30 (MGHCYYNETIGFFYNNSGKELSSHWRPKDV). N-linked (GlcNAc...) asparagine glycans are attached at residues asparagine 7 and asparagine 15. A helical transmembrane segment spans residues 31 to 51 (VVVALGLTVSVLVLLTNLLVI). Residues 52–66 (AAIASNRRFHQPIYY) are Cytoplasmic-facing. The helical transmembrane segment at 67–87 (LLGNLAAADLFAGVAYLFLMF) threads the bilayer. Residues 88–104 (HTGPRTARLSLEGWFLR) are Extracellular-facing. The chain crosses the membrane as a helical span at residues 105-124 (QGLLDTSLTASVATLLAIAV). Residues 125–143 (ERRRSVMAVQLHSRLPRGR) are Cytoplasmic-facing. The helical transmembrane segment at 144–164 (VVMLIVGVWVAALGLGLLPAH) threads the bilayer. The Extracellular segment spans residues 165 to 185 (SWHCLCALDRCSRMAPLLSRS). A helical membrane pass occupies residues 186–206 (YLAVWALSSLLVFLLMVAVYT). Residues 207–239 (RIFFYVRRRVQRMAEHVSCHPRYRETTLSLVKT) lie on the Cytoplasmic side of the membrane. Residues 240 to 260 (VVIILGAFVVCWTPGQVVLLL) form a helical membrane-spanning segment. Topologically, residues 261 to 276 (DGLGCKSCNVLAVEKY) are extracellular. A helical membrane pass occupies residues 277–294 (FLLLAEANSLVNAAVYSC). Over 295–348 (RDAEMRRTFRRLLCCACLRRSTRESAHYTSSAQGGASTRIMLPENGHPLMDSTL) the chain is Cytoplasmic. Cysteine 308 is lipidated: S-palmitoyl cysteine. The PDZ-binding motif lies at 345–348 (DSTL).

This sequence belongs to the G-protein coupled receptor 1 family. As to quaternary structure, interacts with SLC9A3R2/NHERF2, MAGI3 and PLCB3. Interacts with RALA and GRK2.

The protein resides in the cell surface. Its subcellular location is the cell membrane. Receptor for lysophosphatidic acid (LPA), a mediator of diverse cellular activities. Seems to be coupled to the G(i)/G(o), G(12)/G(13), and G(q) families of heteromeric G proteins. Plays a key role in phospholipase C-beta (PLC-beta) signaling pathway. Stimulates phospholipase C (PLC) activity in a manner that is independent of RALA activation. The polypeptide is Lysophosphatidic acid receptor 2 (Macaca fascicularis (Crab-eating macaque)).